A 229-amino-acid chain; its full sequence is Biosynthetic peptidoglycan transglycosylase (229 aa).

The chain crosses the membrane as a helical span at residues 10 to 30; the sequence is LLLALVLVVLYQFWIFMHILW.

Belongs to the glycosyltransferase 51 family.

The protein resides in the cell inner membrane. The enzyme catalyses [GlcNAc-(1-&gt;4)-Mur2Ac(oyl-L-Ala-gamma-D-Glu-L-Lys-D-Ala-D-Ala)](n)-di-trans,octa-cis-undecaprenyl diphosphate + beta-D-GlcNAc-(1-&gt;4)-Mur2Ac(oyl-L-Ala-gamma-D-Glu-L-Lys-D-Ala-D-Ala)-di-trans,octa-cis-undecaprenyl diphosphate = [GlcNAc-(1-&gt;4)-Mur2Ac(oyl-L-Ala-gamma-D-Glu-L-Lys-D-Ala-D-Ala)](n+1)-di-trans,octa-cis-undecaprenyl diphosphate + di-trans,octa-cis-undecaprenyl diphosphate + H(+). The protein operates within cell wall biogenesis; peptidoglycan biosynthesis. Its function is as follows. Peptidoglycan polymerase that catalyzes glycan chain elongation from lipid-linked precursors. This Methylobacillus flagellatus (strain ATCC 51484 / DSM 6875 / VKM B-1610 / KT) protein is Biosynthetic peptidoglycan transglycosylase.